The sequence spans 2000 residues: E3 ubiquitin-protein ligase TTC3 (2000 aa).

The tract at residues 20–249 (MDDFAEGGLS…RHSCMQCVKQ (230 aa)) is interaction with POLG. TPR repeat units lie at residues 250–283 (GELMKMRGNEEFAKEKFEIAVIYYTRAIEYRPEN) and 284–317 (HLLYGNRALCFLRMGQFRNALSDGKRAIVLKNTW). Position 397 is a phosphoserine (serine 397). The segment at 442-478 (CDCHPEFLPPPSQPPRHKGKQKSRNNESEKPSSNSQV) is disordered. TPR repeat units follow at residues 556–592 (VLVVYGLAVSLLGIGRPEELSEAENQFKRIIEHYPNE) and 596–629 (CLAYCGIGKVYLKKNRFLEALNHFEKAKTLICRL). Residues 804–828 (AQERMEEDLRESNPPKPEEPEETVE) are disordered. Position 1029 is a phosphoserine (serine 1029). Disordered stretches follow at residues 1041–1087 (NKGK…GPFA), 1233–1308 (FQPD…PEDA), 1423–1448 (QSSTADARTALSEPEGNSRHSGSSDS), 1806–1839 (LEVKKASQVSPSEQNPEADEKPSGQATRSSQSQK), and 1894–1947 (EEQK…VPAP). The segment covering 1059–1070 (GTASVTPSSETV) has biased composition (polar residues). Serine 1080 carries the post-translational modification Phosphoserine. A compositionally biased stretch (low complexity) spans 1268–1277 (DSDSSSGSAS). The segment covering 1829–1839 (GQATRSSQSQK) has biased composition (polar residues). Residues 1894-1911 (EEQKKKKPNPGKDKKTSE) show a composition bias toward basic and acidic residues. Over residues 1912–1934 (AHPAASVSKSSPSPPLAAAGPSA) the composition is skewed to low complexity. The RING-type; atypical zinc finger occupies 1952-1991 (CQICHEIFKSKNMRVLKCGHKFHKGCFKQWLKGQSTCPTC).

As to quaternary structure, interacts (when phosphorylated on Ser-397) with AKT1, AKT2 and AKT3 (when phosphorylated). Interacts with CIT. Interacts with POLG. Interacts with HSP70. Interacts with SMURF2. In terms of processing, phosphorylation on Ser-397 by Akt is required for ubiquitin ligase activity. Proteolytically cleaved into differently sized N- and C-terminal fragments.

It is found in the nucleus. Its subcellular location is the cytoplasm. It localises to the golgi apparatus. It catalyses the reaction S-ubiquitinyl-[E2 ubiquitin-conjugating enzyme]-L-cysteine + [acceptor protein]-L-lysine = [E2 ubiquitin-conjugating enzyme]-L-cysteine + N(6)-ubiquitinyl-[acceptor protein]-L-lysine.. The protein operates within protein modification; protein ubiquitination. Functionally, E3 ubiquitin-protein ligase which catalyzes the formation of 'Lys-48'-polyubiquitin chains. Mediates the ubiquitination and subsequent degradation of phosphorylated Akt (AKT1, AKT2 and AKT3) in the nucleus. Acts as a terminal regulator of Akt signaling after activation; its phosphorylation by Akt, which is a prerequisite for ubiquitin ligase activity, suggests the existence of a regulation mechanism required to control Akt levels after activation. Positively regulates TGFB1-induced epithelial-mesenchymal transition and myofibroblast differentiation by mediating the ubiquitination and subsequent degradation of SMURF2. Regulates neuronal differentiation by regulating actin remodeling and Golgi organization via a signaling cascade involving RHOA, CIT and ROCK. Inhibits cell proliferation. This chain is E3 ubiquitin-protein ligase TTC3, found in Rattus norvegicus (Rat).